A 1064-amino-acid polypeptide reads, in one-letter code: Protein NLRC3 (1064 aa).

Positions 138–459 (RVSLTIGVAG…YCFIHLSLQE (322 aa)) constitute an NACHT domain. 144-151 (GVAGVGKT) lines the ATP pocket. 16 LRR repeats span residues 338-362 (LGHL…LCEL), 570-593 (LSEL…TLAG), 632-662 (LPQL…VLSG), 664-687 (DCRI…ALAR), 692-715 (NRSL…ALAD), 720-743 (NRTL…CVAE), 748-771 (NQTI…QMAD), 776-799 (NRSL…ALAE), 804-827 (NQIL…VLMR), 832-855 (NQTL…ALTQ), 860-883 (NNTL…AIAV), 888-911 (NHSL…ALGQ), 916-939 (NRTL…SVAG), 972-995 (NRTL…ALAN), 1000-1022 (NSSL…IFVA), and 1028-1051 (NHGL…MISE).

The protein belongs to the NLRP family. In terms of assembly, directly interacts (via CARD) with TMEM173/STING; this interaction reduces TMEM173 trafficking to the perinuclear region in response to interferon stimulatory DNA. Also interacts, but to a lesser extent, with TBK1. Interacts with TRAF6; this interaction results in decreased TRAF6 'Lys-63'-linked polyubiquitination, but leaves 'Lys-48'-linked chains unchanged, promoting TRAF6 protein degradation. Interacts with PIK3R1/PIK3R2; this interaction disrupts the association between PIK3R1/PIK3R2 and the p110 catalytic subunit PIK3CA/PIK3CB/PIK3CD and reduces PIK3R1/PIK3R2 activation. Weakly interacts with PYCARD/ASC. Interacts with CASP1 and CASP5. Expressed in bone marrow-derived macrophages.

It localises to the cytoplasm. Its function is as follows. Negative regulator of the innate immune response. Attenuates signaling pathways activated by Toll-like receptors (TLRs) and the DNA sensor STING/TMEM173 in response to pathogen-associated molecular patterns, such as intracellular poly(dA:dT), but not poly(I:C), or in response to DNA virus infection, including that of Herpes simplex virus 1 (HSV1). May affect TLR4 signaling by acting at the level of TRAF6 ubiquitination, decreasing the activating 'Lys-63'-linked ubiquitination and leaving unchanged the degradative 'Lys-48'-linked ubiquitination. Inhibits the PI3K-AKT-mTOR pathway possibly by directly interacting with the posphatidylinositol 3-kinase regulatory subunit p85 (PIK3R1/PIK3R2) and disrupting the association between PIK3R1/PIK3R2 and the catalytic subunit p110 (PIK3CA/PIK3CB/PIK3CD) and reducing PIK3R1/PIK3R2 activation. Via its regulation of the PI3K-AKT-mTOR pathway, controls cell proliferation, predominantly in intestinal epithelial cells. May also affect NOD1- or NOD2-mediated NF-kappa-B activation. Might also affect the inflammatory response by preventing NLRP3 inflammasome formation, CASP1 cleavage and IL1B maturation. The sequence is that of Protein NLRC3 (Nlrc3) from Mus musculus (Mouse).